Reading from the N-terminus, the 277-residue chain is Thiazole synthase (277 aa).

Catalysis depends on Lys119, which acts as the Schiff-base intermediate with DXP. Residues Gly180, 206 to 207 (AG), and 228 to 229 (NT) each bind 1-deoxy-D-xylulose 5-phosphate.

This sequence belongs to the ThiG family. Homotetramer. Forms heterodimers with either ThiH or ThiS.

It localises to the plastid. The protein localises to the chloroplast. It carries out the reaction [ThiS sulfur-carrier protein]-C-terminal-Gly-aminoethanethioate + 2-iminoacetate + 1-deoxy-D-xylulose 5-phosphate = [ThiS sulfur-carrier protein]-C-terminal Gly-Gly + 2-[(2R,5Z)-2-carboxy-4-methylthiazol-5(2H)-ylidene]ethyl phosphate + 2 H2O + H(+). It participates in cofactor biosynthesis; thiamine diphosphate biosynthesis. Functionally, catalyzes the rearrangement of 1-deoxy-D-xylulose 5-phosphate (DXP) to produce the thiazole phosphate moiety of thiamine. Sulfur is provided by the thiocarboxylate moiety of the carrier protein ThiS. In vitro, sulfur can be provided by H(2)S. The sequence is that of Thiazole synthase from Porphyra purpurea (Red seaweed).